The primary structure comprises 254 residues: SLA class II histocompatibility antigen, DQ haplotype C alpha chain (254 aa).

Positions 1 to 23 are cleaved as a signal peptide; that stretch reads MVPGRVLMWGALALTTVMSACGG. The alpha-1 stretch occupies residues 24-120; sequence EDIAADHVAS…KVPEVTVFSK (97 aa). The Extracellular portion of the chain corresponds to 24 to 216; it reads EDIAADHVAS…IPAPMSELTE (193 aa). N-linked (GlcNAc...) asparagine glycosylation is found at asparagine 104 and asparagine 144. One can recognise an Ig-like C1-type domain in the interval 113-204; that stretch reads PEVTVFSKSP…LDKPLLKHWE (92 aa). Residues 121 to 203 are alpha-2; sequence SPVILGQPNT…GLDKPLLKHW (83 aa). Residues cysteine 133 and cysteine 188 are joined by a disulfide bond. Positions 204–216 are connecting peptide; the sequence is EPEIPAPMSELTE. The chain crosses the membrane as a helical span at residues 217–239; sequence TVVCALGLIVGLVGIVVGTVFII. At 240–254 the chain is on the cytoplasmic side; it reads QGLRSGGPSRHQGSL.

It belongs to the MHC class II family.

It localises to the membrane. The protein is SLA class II histocompatibility antigen, DQ haplotype C alpha chain of Sus scrofa (Pig).